Consider the following 404-residue polypeptide: Retrotransposable element SLACS 45 kDa protein (404 aa).

2 stretches are compositionally biased toward polar residues: residues 1-11 (MVRNLRSSEPQ) and 29-41 (PALN…QKQV). Disordered regions lie at residues 1–62 (MVRN…NTSI), 86–111 (KKAA…GRPP), 134–251 (LGKG…KKGA), 317–341 (CRQQ…GAVS), and 369–404 (PKLP…AGPP). Residues 98–111 (VNKEGNRKKYGRPP) are compositionally biased toward basic and acidic residues. Residues 141–151 (TAHTKSNQSRV) are compositionally biased toward polar residues. The segment at 300 to 321 (CPVCGFAHPEETITVTHCRQQH) adopts a C2H2-type zinc-finger fold. Residues 395 to 404 (HHCDRSAGPP) show a composition bias toward basic and acidic residues.

The polypeptide is Retrotransposable element SLACS 45 kDa protein (Trypanosoma brucei gambiense).